The primary structure comprises 170 residues: MELKDYIATIENYPKEGVVFRDISPLMADGNAYNYAATEIVQYARDKEIDMVVGPEARGFIIGCPVAFALGVGFAPVRKPGKLPREVIEATYEKEYGTDTLTMHSDSIKPGQRVLIVDDLLATGGTIAATIELVEKMGGVVVGCAFLIELDELKGREKIGNYVYKVLMHY.

It belongs to the purine/pyrimidine phosphoribosyltransferase family. In terms of assembly, homodimer.

It localises to the cytoplasm. It catalyses the reaction AMP + diphosphate = 5-phospho-alpha-D-ribose 1-diphosphate + adenine. Its pathway is purine metabolism; AMP biosynthesis via salvage pathway; AMP from adenine: step 1/1. Functionally, catalyzes a salvage reaction resulting in the formation of AMP, that is energically less costly than de novo synthesis. In Lactococcus lactis subsp. cremoris (strain SK11), this protein is Adenine phosphoribosyltransferase.